The following is a 232-amino-acid chain: Urease accessory protein UreF (232 aa).

The protein belongs to the UreF family. As to quaternary structure, ureD, UreF and UreG form a complex that acts as a GTP-hydrolysis-dependent molecular chaperone, activating the urease apoprotein by helping to assemble the nickel containing metallocenter of UreC. The UreE protein probably delivers the nickel.

It localises to the cytoplasm. Required for maturation of urease via the functional incorporation of the urease nickel metallocenter. The polypeptide is Urease accessory protein UreF (Trichodesmium erythraeum (strain IMS101)).